The primary structure comprises 444 residues: Beta-D-glucosyl crocetin beta-1,6-glucosyltransferase (444 aa).

Residue His9 is the Proton acceptor of the active site. His9 provides a ligand contact to an anthocyanidin. Asp108 acts as the Charge relay in catalysis. Residues Thr130, Ala319, Gln321, His336, Trp339, Asn340, Ser341, Glu344, Asp360, and Gln361 each coordinate UDP-alpha-D-glucose.

The protein belongs to the UDP-glycosyltransferase family. In terms of tissue distribution, ubiquitous.

The catalysed reaction is beta-D-glucosyl crocetin + UDP-alpha-D-glucose = beta-D-gentiobiosyl crocetin + UDP + H(+). The enzyme catalyses bis(beta-D-glucosyl) crocetin + UDP-alpha-D-glucose = beta-D-gentiobiosyl beta-D-glucosyl crocetin + UDP + H(+). It catalyses the reaction beta-D-gentiobiosyl beta-D-glucosyl crocetin + UDP-alpha-D-glucose = bis(beta-D-gentiobiosyl) crocetin + UDP + H(+). Functionally, glucosyltransferase catalyzing the beta 1-6 glucosylation of the sugar moiety of crocetin glucosyl esters to produce crocetin gentiobiosyl esters. Weak activity toward curcumin glucosides, but no activity with flavonoid glucosides, coumarin glucosides, 4-nitrophenyl glucoside or crocetin. Involved with UGT75L6 in sequential glycosylation of crocetin to crocin (bis(beta-D-gentiobiosyl) crocetin). The chain is Beta-D-glucosyl crocetin beta-1,6-glucosyltransferase (UGT94E5) from Gardenia jasminoides (Cape jasmine).